We begin with the raw amino-acid sequence, 592 residues long: MNVFHDIKETVLAQVAALQAEGRLPEGLETGRVAVEPPREAAHGDMATNAAMVLAKPAGLAPRAVAEMLVEKLVGVDGIVAAETAGPGFINLRLDPKIWRKTLKTVLTLGTAFGASTMGRGAAVNVEFVSANPTGPMHVGHGRGAVFGDALAALLVKAGWAVTREYYVNDAGAQVDSLARALYARYRVAVGDLDEAAFAAMLAAREIEYGGDYLVPVAADIAQADGTRWTTVAESDWLPAFRAIGIERMLALIKEDLAALGVVHDVFTSEQALVRAGRVDEMMTDLESRDLVYVGTLEPPKGKTPDDWEPRPQTLFRATGFGDEVDRPLKKSDGSWTYFASDIAYHHDKFKRGFLGMINVLGADHGGYVKRLKAAVKAVSNGEAELDVKLVQLVKLLDNGEPVKMSKRAGTFITLREVVDEVGKDVVRFIMLTRKNDAALDFDYARVTEKTRDNPVFYVQYAHARACSVARHAAQTFPGRDLSAAALAATADLDLLDADEEMAMVRLLAGWPRLVESAAEAHEPHRVAFYLGEVAAAFHGLWNRGNDNAELRFLLPTDEARSLARLALVQAVASVIASGLEIFGVEPVKEMR.

The 'HIGH' region signature appears at 131–141 (ANPTGPMHVGH).

This sequence belongs to the class-I aminoacyl-tRNA synthetase family. In terms of assembly, monomer.

Its subcellular location is the cytoplasm. It carries out the reaction tRNA(Arg) + L-arginine + ATP = L-arginyl-tRNA(Arg) + AMP + diphosphate. The chain is Arginine--tRNA ligase from Rhodospirillum rubrum (strain ATCC 11170 / ATH 1.1.1 / DSM 467 / LMG 4362 / NCIMB 8255 / S1).